Consider the following 147-residue polypeptide: Phospholipase A2 SSD387 (147 aa).

Residues 1-19 (MSPKFLLFSIIAVWSCAAA) form the signal peptide. Positions 20–28 (IEALFIQPR) are excised as a propeptide. Cystine bridges form between Cys-55–Cys-71, Cys-70–Cys-130, Cys-77–Cys-123, Cys-86–Cys-116, and Cys-109–Cys-121. Residues Gly-56 and Gly-58 each contribute to the Ca(2+) site. Residue His-74 is part of the active site. Asp-75 lines the Ca(2+) pocket. Asp-124 is a catalytic residue.

Ca(2+) serves as cofactor. As to expression, expressed by the venom gland.

The protein resides in the secreted. It catalyses the reaction a 1,2-diacyl-sn-glycero-3-phosphocholine + H2O = a 1-acyl-sn-glycero-3-phosphocholine + a fatty acid + H(+). PLA2 catalyzes the calcium-dependent hydrolysis of the 2-acyl groups in 3-sn-phosphoglycerides. In Scolopendra dehaani (Thai centipede), this protein is Phospholipase A2 SSD387.